Here is a 259-residue protein sequence, read N- to C-terminus: Ubiquinone/menaquinone biosynthesis C-methyltransferase UbiE (259 aa).

S-adenosyl-L-methionine is bound by residues Thr-82, Asp-103, 131 to 132, and Ser-148; that span reads NA.

Belongs to the class I-like SAM-binding methyltransferase superfamily. MenG/UbiE family.

The enzyme catalyses a 2-demethylmenaquinol + S-adenosyl-L-methionine = a menaquinol + S-adenosyl-L-homocysteine + H(+). The catalysed reaction is a 2-methoxy-6-(all-trans-polyprenyl)benzene-1,4-diol + S-adenosyl-L-methionine = a 5-methoxy-2-methyl-3-(all-trans-polyprenyl)benzene-1,4-diol + S-adenosyl-L-homocysteine + H(+). The protein operates within quinol/quinone metabolism; menaquinone biosynthesis; menaquinol from 1,4-dihydroxy-2-naphthoate: step 2/2. It functions in the pathway cofactor biosynthesis; ubiquinone biosynthesis. In terms of biological role, methyltransferase required for the conversion of demethylmenaquinol (DMKH2) to menaquinol (MKH2) and the conversion of 2-polyprenyl-6-methoxy-1,4-benzoquinol (DDMQH2) to 2-polyprenyl-3-methyl-6-methoxy-1,4-benzoquinol (DMQH2). The sequence is that of Ubiquinone/menaquinone biosynthesis C-methyltransferase UbiE from Vibrio parahaemolyticus serotype O3:K6 (strain RIMD 2210633).